Here is a 121-residue protein sequence, read N- to C-terminus: uncharacterized protein (121 aa).

A helical membrane pass occupies residues 6 to 26 (ITTASILLVVIVAFCAAAPMI).

The protein localises to the membrane. This is an uncharacterized protein from Caenorhabditis elegans.